The primary structure comprises 155 residues: Endoribonuclease YbeY (155 aa).

The tract at residues 64-84 (SFPMDEMRAPGDDEDPPSGLL) is disordered. Zn(2+) is bound by residues histidine 115, histidine 119, and histidine 125.

This sequence belongs to the endoribonuclease YbeY family. Zn(2+) serves as cofactor.

It localises to the cytoplasm. Its function is as follows. Single strand-specific metallo-endoribonuclease involved in late-stage 70S ribosome quality control and in maturation of the 3' terminus of the 16S rRNA. This Cutibacterium acnes (strain DSM 16379 / KPA171202) (Propionibacterium acnes) protein is Endoribonuclease YbeY.